A 673-amino-acid chain; its full sequence is Protein VirD3 (673 aa).

6 disordered regions span residues 36–73 (VAGE…GRLG), 171–216 (SPVN…GTSV), 229–409 (ERDT…LRSS), 478–497 (RLNG…LEDF), 520–552 (EKGK…VTPL), and 585–673 (DSSR…GCGR). Composition is skewed to polar residues over residues 171 to 183 (SPVN…SNWQ), 193 to 216 (VQPS…GTSV), 234 to 246 (SETT…TISS), and 268 to 277 (QSLSVTVTTP). Residues 278–287 (NSNAEASSHS) are compositionally biased toward low complexity. Basic and acidic residues predominate over residues 288-303 (AHTETLDDVSSDRSSE). Composition is skewed to basic and acidic residues over residues 520–534 (EKGK…DTRF) and 638–673 (AAEH…GCGR).

This chain is Protein VirD3 (virD3), found in Agrobacterium fabrum (strain C58 / ATCC 33970) (Agrobacterium tumefaciens (strain C58)).